We begin with the raw amino-acid sequence, 285 residues long: Nucleotide-binding protein PSPPH_4154 (285 aa).

8–15 (GRSGSGKS) contacts ATP. GTP is bound at residue 60 to 63 (DARN).

It belongs to the RapZ-like family.

Functionally, displays ATPase and GTPase activities. The sequence is that of Nucleotide-binding protein PSPPH_4154 from Pseudomonas savastanoi pv. phaseolicola (strain 1448A / Race 6) (Pseudomonas syringae pv. phaseolicola (strain 1448A / Race 6)).